The primary structure comprises 213 residues: Probable septum site-determining protein MinC (213 aa).

This sequence belongs to the MinC family. As to quaternary structure, interacts with MinD and FtsZ.

Cell division inhibitor that blocks the formation of polar Z ring septums. Rapidly oscillates between the poles of the cell to destabilize FtsZ filaments that have formed before they mature into polar Z rings. Prevents FtsZ polymerization. This is Probable septum site-determining protein MinC from Clostridium botulinum (strain Eklund 17B / Type B).